The primary structure comprises 364 residues: Dual-specificity RNA methyltransferase RlmN (364 aa).

Glu-91 (proton acceptor) is an active-site residue. One can recognise a Radical SAM core domain in the interval 97-333 (EDDRGTLCIS…TTTRKTRGDD (237 aa)). A disulfide bridge links Cys-104 with Cys-338. The [4Fe-4S] cluster site is built by Cys-111, Cys-115, and Cys-118. S-adenosyl-L-methionine-binding positions include 164–165 (GE), Ser-196, 218–220 (SLH), and Asn-295. Catalysis depends on Cys-338, which acts as the S-methylcysteine intermediate.

This sequence belongs to the radical SAM superfamily. RlmN family. The cofactor is [4Fe-4S] cluster.

It is found in the cytoplasm. It catalyses the reaction adenosine(2503) in 23S rRNA + 2 reduced [2Fe-2S]-[ferredoxin] + 2 S-adenosyl-L-methionine = 2-methyladenosine(2503) in 23S rRNA + 5'-deoxyadenosine + L-methionine + 2 oxidized [2Fe-2S]-[ferredoxin] + S-adenosyl-L-homocysteine. The catalysed reaction is adenosine(37) in tRNA + 2 reduced [2Fe-2S]-[ferredoxin] + 2 S-adenosyl-L-methionine = 2-methyladenosine(37) in tRNA + 5'-deoxyadenosine + L-methionine + 2 oxidized [2Fe-2S]-[ferredoxin] + S-adenosyl-L-homocysteine. Its function is as follows. Specifically methylates position 2 of adenine 2503 in 23S rRNA and position 2 of adenine 37 in tRNAs. m2A2503 modification seems to play a crucial role in the proofreading step occurring at the peptidyl transferase center and thus would serve to optimize ribosomal fidelity. The chain is Dual-specificity RNA methyltransferase RlmN from Dechloromonas aromatica (strain RCB).